The sequence spans 162 residues: Shikimate kinase (162 aa).

10–15 contributes to the ATP binding site; the sequence is GAGKST. Ser-14 is a Mg(2+) binding site. Residues Asp-28, Arg-52, and Gly-73 each contribute to the substrate site. ATP is bound at residue Arg-113. Arg-129 contacts substrate.

Belongs to the shikimate kinase family. As to quaternary structure, monomer. Mg(2+) serves as cofactor.

The protein resides in the cytoplasm. It catalyses the reaction shikimate + ATP = 3-phosphoshikimate + ADP + H(+). It functions in the pathway metabolic intermediate biosynthesis; chorismate biosynthesis; chorismate from D-erythrose 4-phosphate and phosphoenolpyruvate: step 5/7. Its function is as follows. Catalyzes the specific phosphorylation of the 3-hydroxyl group of shikimic acid using ATP as a cosubstrate. The polypeptide is Shikimate kinase (Lactococcus lactis subsp. cremoris (strain MG1363)).